We begin with the raw amino-acid sequence, 574 residues long: Cholinesterase (574 aa).

N57 carries N-linked (GlcNAc...) asparagine glycosylation. C65 and C92 are joined by a disulfide. N106 carries N-linked (GlcNAc...) asparagine glycosylation. 116-117 (GG) contributes to the substrate binding site. S198 (acyl-ester intermediate) is an active-site residue. The residue at position 198 (S198) is a Phosphoserine. Residues N241 and N256 are each glycosylated (N-linked (GlcNAc...) asparagine). Residues C252 and C263 are joined by a disulfide bond. The Charge relay system role is filled by E325. An N-linked (GlcNAc...) asparagine glycan is attached at N341. Cysteines 400 and 519 form a disulfide. The Charge relay system role is filled by H438. 3 N-linked (GlcNAc...) asparagine glycosylation sites follow: N455, N481, and N486.

This sequence belongs to the type-B carboxylesterase/lipase family. In terms of assembly, homotetramer; disulfide-linked. Dimer of dimers. As to expression, detected in blood plasma (at protein level). Present in most cells except erythrocytes.

It localises to the secreted. The enzyme catalyses an acylcholine + H2O = a carboxylate + choline + H(+). Functionally, esterase with broad substrate specificity. Contributes to the inactivation of the neurotransmitter acetylcholine. Can degrade neurotoxic organophosphate esters. The polypeptide is Cholinesterase (BCHE) (Equus caballus (Horse)).